The following is a 124-amino-acid chain: Fluoride-specific ion channel FluC (124 aa).

A run of 4 helical transmembrane segments spans residues 5–25 (ILAV…TGTW), 38–58 (TLAV…LFLL), 69–89 (GLIV…LDTL), and 99–119 (LALG…WAGL). 2 residues coordinate Na(+): Gly-76 and Thr-79.

It belongs to the fluoride channel Fluc/FEX (TC 1.A.43) family.

The protein localises to the cell inner membrane. It catalyses the reaction fluoride(in) = fluoride(out). Its activity is regulated as follows. Na(+) is not transported, but it plays an essential structural role and its presence is essential for fluoride channel function. Fluoride-specific ion channel. Important for reducing fluoride concentration in the cell, thus reducing its toxicity. The sequence is that of Fluoride-specific ion channel FluC from Pseudomonas syringae pv. syringae (strain B728a).